The following is a 112-amino-acid chain: MFARQATSVSAFLVLTLSLFAAASPLGPAPPTTSQCNVGNQQCCNTVQDSSSAPAAALLGLLGVVLQDVDVLVCSPITVIGGLNSACDASPVCCENNSFGSLISVGCIPISL.

The first 23 residues, 1 to 23 (MFARQATSVSAFLVLTLSLFAAA), serve as a signal peptide directing secretion. 4 disulfides stabilise this stretch: Cys36-Cys93, Cys43-Cys87, Cys44-Cys74, and Cys94-Cys107. Asn96 is a glycosylation site (N-linked (GlcNAc...) asparagine).

It belongs to the fungal hydrophobin family. In terms of assembly, self-assembles to form functional amyloid fibrils called rodlets. Self-assembly into fibrillar rodlets occurs spontaneously at hydrophobic:hydrophilic interfaces and the rodlets further associate laterally to form amphipathic monolayers.

It localises to the secreted. Its subcellular location is the cell wall. Its function is as follows. Aerial growth, conidiation, and dispersal of filamentous fungi in the environment rely upon a capability of their secreting small amphipathic proteins called hydrophobins (HPBs) with low sequence identity. Class I can self-assemble into an outermost layer of rodlet bundles on aerial cell surfaces, conferring cellular hydrophobicity that supports fungal growth, development and dispersal; whereas Class II form highly ordered films at water-air interfaces through intermolecular interactions but contribute nothing to the rodlet structure. This is Class I hydrophobin 7 from Flammulina velutipes (Agaricus velutipes).